The following is a 408-amino-acid chain: 3-hydroxy-3-methylglutaryl-coenzyme A reductase (408 aa).

Residues E101 and D307 each act as charge relay system in the active site. The active-site Proton donor is H403.

It belongs to the HMG-CoA reductase family.

It catalyses the reaction (R)-mevalonate + 2 NADP(+) + CoA = (3S)-3-hydroxy-3-methylglutaryl-CoA + 2 NADPH + 2 H(+). The protein operates within metabolic intermediate biosynthesis; (R)-mevalonate biosynthesis; (R)-mevalonate from acetyl-CoA: step 3/3. Functionally, converts HMG-CoA to mevalonate. This is 3-hydroxy-3-methylglutaryl-coenzyme A reductase (hmgA) from Pyrococcus abyssi (strain GE5 / Orsay).